The primary structure comprises 497 residues: Serine/threonine-protein phosphatase 2A 56 kDa regulatory subunit beta isoform (497 aa).

Positions 1-19 (METKLPPASTPTSPSSPGL) are enriched in low complexity. 2 disordered regions span residues 1–55 (METK…YQSN) and 473–497 (QGTQ…GGQS). Residues Ser-32, Ser-35, Ser-44, Ser-46, Ser-47, and Ser-48 each carry the phosphoserine modification. Residues 34 to 45 (RSLRRARPRRSH) show a composition bias toward basic residues.

This sequence belongs to the phosphatase 2A regulatory subunit B56 family. As to quaternary structure, component of the serine/threonine-protein phosphatase 2A complex (PP2A). This complex consists of a common heterodimeric core enzyme, composed of a 36 kDa catalytic subunit (subunit C) and a 65 kDa constant scaffold subunit (PR65 or subunit A), that associates with a variety of regulatory subunits. Proteins that associate with the core dimer include three families of regulatory subunits B (the R2/B/PR55/B55, R3/B''/PR72/PR130/PR59 and R5/B'/B56 families), the 48 kDa variable regulatory subunit, viral proteins, and cell signaling molecules. Interacts with SGO1. Interacts with AKT1. Ubiquitinated by CUL3-KLHL15 complex; this modification leads to proteasomal degradation.

It localises to the cytoplasm. Functionally, as the regulatory component of the serine/threonine-protein phosphatase 2A (PP2A) holoenzyme, modulates substrate specificity, subcellular localization, and responsiveness to phosphorylation. The phosphorylated form mediates the interaction between PP2A and AKT1, leading to AKT1 dephosphorylation. This chain is Serine/threonine-protein phosphatase 2A 56 kDa regulatory subunit beta isoform (Ppp2r5b), found in Mus musculus (Mouse).